We begin with the raw amino-acid sequence, 352 residues long: MNQADAWKLRSSRYEAVQFSREINKQLSELRPDNVMGAIYIAKDYAVIAACTLATLCVSWWLYPLAVLLIGAYQRGLTTIAHDAAHRTLAKNTTWNYVLGILFAAYPLFQRHWAYRISHVYLHHPYLGDPEKDPDLKFFMANGVYDVQPPKRYAFNIIWKPIFGGATLAYLKYLWTNRFSITDSEDQSRSSILVDKYGFYLFWIGILAGSYALGLLHIVILFWIVPYLTTFQVLGWFVELAEHSPMCESETKNVYLTRNRKGNFLERAILGQNLDEYHLEHHLSPGIPFWLLHKAQKIRMQDPGYAKVAASWGGLFVKGPQGQPSVITQLKERNRRLYEQSLADAHAKGHVA.

The next 3 helical transmembrane spans lie at 53-73 (LATL…IGAY), 89-109 (LAKN…YPLF), and 204-224 (IGIL…LFWI).

Belongs to the fatty acid desaturase type 1 family.

It localises to the cell inner membrane. It carries out the reaction dihydrorhizobitoxine + 2 reduced [2Fe-2S]-[ferredoxin] + O2 + 2 H(+) = rhizobitoxine + 2 oxidized [2Fe-2S]-[ferredoxin] + 2 H2O. Involved in the biosynthesis of the nodulation enhancer compound rhizobitoxine. Catalyzes the final step of the pathway, the introduction of a carbon double bond into the C3 position of dihydrorhizobitoxine to produce rhizobitoxine. The protein is Dihydrorhizobitoxine desaturase of Bradyrhizobium elkanii.